The chain runs to 284 residues: Tropomyosin-1 (284 aa).

The stretch at 1–284 forms a coiled coil; that stretch reads MDAIKKKMLA…DSTFAELAGY (284 aa). The segment at 103–131 is disordered; sequence EERLQSATEKLEEASKAADESERGRKVLE.

It belongs to the tropomyosin family. Homodimer.

Its function is as follows. Tropomyosin, in association with the troponin complex, plays a central role in the calcium dependent regulation of muscle contraction. The chain is Tropomyosin-1 from Biomphalaria glabrata (Bloodfluke planorb).